A 416-amino-acid polypeptide reads, in one-letter code: Lipoyl synthase, mitochondrial (416 aa).

A mitochondrion-targeting transit peptide spans 1 to 33; that stretch reads MAAPTRSLRRLSSFRTTISPSLTVTAPIGCRSY. [4Fe-4S] cluster-binding residues include Cys132, Cys137, Cys143, Cys163, Cys167, Cys170, and Ser378. Residues 148-367 form the Radical SAM core domain; that stretch reads DKSSATATIM…RQRALDMGFL (220 aa). The disordered stretch occupies residues 396 to 416; that stretch reads GSGTAERTVDQTAATTDEATR. A compositionally biased stretch (polar residues) spans 405-416; the sequence is DQTAATTDEATR.

It belongs to the radical SAM superfamily. Lipoyl synthase family. Requires [4Fe-4S] cluster as cofactor.

It localises to the mitochondrion. The enzyme catalyses [[Fe-S] cluster scaffold protein carrying a second [4Fe-4S](2+) cluster] + N(6)-octanoyl-L-lysyl-[protein] + 2 oxidized [2Fe-2S]-[ferredoxin] + 2 S-adenosyl-L-methionine + 4 H(+) = [[Fe-S] cluster scaffold protein] + N(6)-[(R)-dihydrolipoyl]-L-lysyl-[protein] + 4 Fe(3+) + 2 hydrogen sulfide + 2 5'-deoxyadenosine + 2 L-methionine + 2 reduced [2Fe-2S]-[ferredoxin]. It functions in the pathway protein modification; protein lipoylation via endogenous pathway; protein N(6)-(lipoyl)lysine from octanoyl-[acyl-carrier-protein]: step 2/2. Its function is as follows. Catalyzes the radical-mediated insertion of two sulfur atoms into the C-6 and C-8 positions of the octanoyl moiety bound to the lipoyl domains of lipoate-dependent enzymes, thereby converting the octanoylated domains into lipoylated derivatives. This chain is Lipoyl synthase, mitochondrial, found in Penicillium rubens (strain ATCC 28089 / DSM 1075 / NRRL 1951 / Wisconsin 54-1255) (Penicillium chrysogenum).